The following is a 433-amino-acid chain: Inward rectifier potassium channel 18 (433 aa).

At 1–77 (MTAASRANPY…LADMFTTCVD (77 aa)) the chain is on the cytoplasmic side. A helical membrane pass occupies residues 78-104 (IRWRYMLLIFSLAFLASWLLFGVIFWV). Residues 105–129 (IAVAHGDLEPAEGHGRTPCVMQVHG) are Extracellular-facing. The helical; Pore-forming intramembrane region spans 130-146 (FMAAFLFSIETQTTIGY). A Selectivity filter motif is present at residues 143-148 (TIGYGL). Topologically, residues 147-155 (GLRCVTEEC) are extracellular. Residues 156–183 (LVAVFMVVAQSIVGCIIDSFMIGAIMAK) form a helical membrane-spanning segment. Over 184–433 (MARPKKRAQT…QRPYRRGSEI (250 aa)) the chain is Cytoplasmic. The disordered stretch occupies residues 387-433 (DEEDEADGDQDGRSRDGLSPQARHDFDRLQAGGGVLEQRPYRRGSEI). Basic and acidic residues predominate over residues 396–414 (QDGRSRDGLSPQARHDFDR).

Belongs to the inward rectifier-type potassium channel (TC 1.A.2.1) family. KCNJ12 subfamily. In terms of assembly, can form heteromeric channels with Kir2.1/KCNJ2. Can form heteromeric channels with Kir2.2/KCNJ12. Probably phosphorylated by PKC; decreases single-channel open probability. As to expression, specifically expressed in skeletal muscle.

It localises to the cell membrane. Its subcellular location is the endoplasmic reticulum. The catalysed reaction is K(+)(in) = K(+)(out). Its function is as follows. Inward rectifier potassium channels are characterized by a greater tendency to allow potassium to flow into the cell rather than out of it. Their voltage dependence is regulated by the concentration of extracellular potassium; as external potassium is raised, the voltage range of the channel opening shifts to more positive voltages. The inward rectification is mainly due to the blockage of outward current by internal magnesium. The chain is Inward rectifier potassium channel 18 (KCNJ18) from Homo sapiens (Human).